A 702-amino-acid polypeptide reads, in one-letter code: SAGA complex subunit NGG1 (702 aa).

Residues 1–10 show a composition bias toward basic residues; that stretch reads MPRHGRRGKL. 2 disordered regions span residues 1-29 and 90-224; these read MPRH…PSKL and LRKI…VKNP. Basic and acidic residues-rich tracts occupy residues 11-22 and 90-108; these read PKGEKLPKKEGG and LRKI…EKQE. The segment covering 109–125 has biased composition (polar residues); the sequence is TSNADGQHESSTATEET. Phosphoserine is present on Ser134. Over residues 162 to 219 the composition is skewed to basic and acidic residues; the sequence is MAKEEINEDKDLQVHRDQPREKRPFDSETENRATENENTQRPDNKKQKIDVDKMENDP. Phosphoserine is present on Ser407. Thr464 is modified (phosphothreonine). The Nuclear localization signal signature appears at 606 to 618; that stretch reads KRIRVPKKRKKHH. 2 disordered regions span residues 611–636 and 672–702; these read PKKR…IAQQ and NESV…VELN. A compositionally biased stretch (polar residues) spans 620-636; it reads AASNNVNTGTTSQIAQQ. Over residues 680 to 689 the composition is skewed to acidic residues; that stretch reads DQEEDEDEAD.

This sequence belongs to the NGG1 family. In terms of assembly, component of the 1.8 MDa SAGA (Spt-Ada-Gcn5 acetyltransferase) complex, which is composed of 19 subunits TRA1, SPT7, TAF5, NGG1/ADA3, SGF73, SPT20/ADA5, SPT8, TAF12, TAF6, HFI1/ADA1, UBP8, GCN5, ADA2, SPT3, SGF29, TAF10, TAF9, SGF11 and SUS1. The SAGA complex is composed of 4 modules, namely the HAT (histone acetyltransferase) module (GCN5, ADA2, NGG1/ADA3 and SGF29), the DUB (deubiquitinating) module (UBP8, SGF11, SGF73 and SUS1), the core or TAF (TBP-associated factor) module (TAF5, TAF6, TAF9, TAF10 and TAF12), and the Tra1 or SPT (Suppressor of Ty) module (TRA1, HFI1/ADA1, SPT3, SPT7, SPT8 and SPT20/ADA5). The Tra1/SPT module binds activators, the core module recruits TBP (TATA-binding protein), the HAT module contains the histone H3 acetyltransferase GCN5, and the DUB module comprises the histone H2B deubiquitinase UBP8. Also identified in an altered form of SAGA, named SALSA (SAGA altered, Spt8 absent) or SLIK (SAGA-like) complex, which contains a C-terminal truncated form of SPT7 and is missing SPT8. However, it has been shown that the SAGA and SAGA-like SALSA/SLIK transcriptional coactivators are structurally and biochemically equivalent. Component of the 0.8 MDa ADA complex, a HAT complex distinct from SAGA, which at least consists of ADA2, NGG1/ADA3, AHC1, AHC2, SGF29 and GCN5. Identified in an Ada.spt complex with SPT7 and TRA1. Component of an ADA/GCN5 complex that consists of HFI1/ADA1, ADA2, NGG1/ADA3, SPT20/ADA5 and GCN5 and probably is a subcomplex of SAGA.

The protein localises to the nucleus. Its function is as follows. Component of the transcription coactivator SAGA complex. SAGA acts as a general cofactor required for essentially all RNA polymerase II transcription. At the promoters, SAGA is required for transcription pre-initiation complex (PIC) recruitment. It influences RNA polymerase II transcriptional activity through different activities such as TBP interaction (via core/TAF module) and promoter selectivity, interaction with transcription activators (via Tra1/SPT module), and chromatin modification through histone acetylation (via HAT module) and deubiquitination (via DUB module). SAGA preferentially acetylates histones H3 (to form H3K9ac, H3K14ac, H3K18ac and H3K23ac) and H2B and deubiquitinates histone H2B. SAGA interacts with DNA via upstream activating sequences (UASs). Also identified in a modified version of SAGA named SALSA or SLIK. The cleavage of SPT7 and the absence of the SPT8 subunit in SLIK neither drive any major conformational differences in its structure compared with SAGA, nor significantly affect HAT, DUB, or DNA-binding activities. Component of the ADA histone acetyltransferase complex, which preferentially acetylates nucleosomal histones H3 (to form H3K14ac and H3K18ac) and H2B. May be involved in response to DNA damage by genotoxic agents. The polypeptide is SAGA complex subunit NGG1 (NGG1) (Saccharomyces cerevisiae (strain ATCC 204508 / S288c) (Baker's yeast)).